The chain runs to 630 residues: GTPase-activating protein NEL1 (630 aa).

It belongs to the SEC23/SEC24 family. SEC23 subfamily.

The protein localises to the cytoplasm. It localises to the nucleus. Its function is as follows. Acts as a GTPase-activating protein (GAP) for SAR1. Contrary to its SEC23 homolog, NEL1 does not associate with SEC24 and its homologs, nor does it associate with the COPII components, suggesting that it is unlikely that NEL1 functions as a structural component of the vesicle coat machinery. May function as a signaling molecule. The chain is GTPase-activating protein NEL1 from Saccharomyces cerevisiae (strain ATCC 204508 / S288c) (Baker's yeast).